The primary structure comprises 169 residues: MIEVAVQAEPDWADGTDWERLAIEAVTAAMRTTPHAAMLDAAYMAEVSIRLTDDDEVHALNRQYRQKDKPTNVLSFPMVQDDLIEGLDNSDDGEVLLGDIILARGVCVREAAEKGVPTAEHATHLIVHGTLHLLGYDHIEDDEAEAMEDLERVALATLGIDDPYAITED.

Zn(2+) is bound by residues His-128, His-132, and His-138.

The protein belongs to the endoribonuclease YbeY family. Zn(2+) serves as cofactor.

The protein localises to the cytoplasm. In terms of biological role, single strand-specific metallo-endoribonuclease involved in late-stage 70S ribosome quality control and in maturation of the 3' terminus of the 16S rRNA. This chain is Endoribonuclease YbeY, found in Rhizorhabdus wittichii (strain DSM 6014 / CCUG 31198 / JCM 15750 / NBRC 105917 / EY 4224 / RW1) (Sphingomonas wittichii).